Here is a 159-residue protein sequence, read N- to C-terminus: MNTNQNTNLKEITMYTDGACSGNPGPGGYGVVMLYKGHRKELSAGFRDTTNNRMELLATIVGLETLKEKCNVNLYTDSQYVVNAIEKGWAKKWRANGWMRNKKEPALNPDLWERLLKLCEFHNVKFNWVKGHAGHPENERCDQLAVAAAKQPNLPLDVR.

The RNase H type-1 domain maps to 8–150; it reads NLKEITMYTD…CDQLAVAAAK (143 aa). The Mg(2+) site is built by D17, E55, D77, and D142.

Belongs to the RNase H family. In terms of assembly, monomer. Mg(2+) is required as a cofactor.

It localises to the cytoplasm. It carries out the reaction Endonucleolytic cleavage to 5'-phosphomonoester.. Functionally, endonuclease that specifically degrades the RNA of RNA-DNA hybrids. The chain is Ribonuclease H from Desulforamulus reducens (strain ATCC BAA-1160 / DSM 100696 / MI-1) (Desulfotomaculum reducens).